The sequence spans 227 residues: 2,3-bisphosphoglycerate-dependent phosphoglycerate mutase (227 aa).

Substrate-binding positions include 8 to 15 (RHGKSVWN), 21 to 22 (TG), Arg58, 110 to 113 (ERMY), Lys121, 137 to 138 (RR), and 181 to 182 (GN). His9 (tele-phosphohistidine intermediate) is an active-site residue. Residue Glu110 is the Proton donor/acceptor of the active site.

This sequence belongs to the phosphoglycerate mutase family. BPG-dependent PGAM subfamily.

It catalyses the reaction (2R)-2-phosphoglycerate = (2R)-3-phosphoglycerate. Its pathway is carbohydrate degradation; glycolysis; pyruvate from D-glyceraldehyde 3-phosphate: step 3/5. Its function is as follows. Catalyzes the interconversion of 2-phosphoglycerate and 3-phosphoglycerate. The sequence is that of 2,3-bisphosphoglycerate-dependent phosphoglycerate mutase from Chlamydia caviae (strain ATCC VR-813 / DSM 19441 / 03DC25 / GPIC) (Chlamydophila caviae).